Consider the following 413-residue polypeptide: CinA-like protein (413 aa).

The protein belongs to the CinA family.

The polypeptide is CinA-like protein (Desulfosudis oleivorans (strain DSM 6200 / JCM 39069 / Hxd3) (Desulfococcus oleovorans)).